The sequence spans 607 residues: Elongation factor 4 (607 aa).

Residues 11 to 193 (ENIRNFSIIA…KIVEVVPAPD (183 aa)) enclose the tr-type G domain. GTP-binding positions include 23 to 28 (DHGKST) and 140 to 143 (NKID).

It belongs to the TRAFAC class translation factor GTPase superfamily. Classic translation factor GTPase family. LepA subfamily.

The protein resides in the cell membrane. It catalyses the reaction GTP + H2O = GDP + phosphate + H(+). Functionally, required for accurate and efficient protein synthesis under certain stress conditions. May act as a fidelity factor of the translation reaction, by catalyzing a one-codon backward translocation of tRNAs on improperly translocated ribosomes. Back-translocation proceeds from a post-translocation (POST) complex to a pre-translocation (PRE) complex, thus giving elongation factor G a second chance to translocate the tRNAs correctly. Binds to ribosomes in a GTP-dependent manner. The sequence is that of Elongation factor 4 from Staphylococcus aureus (strain MW2).